Here is a 454-residue protein sequence, read N- to C-terminus: Zinc finger CCCH domain-containing protein 66 (454 aa).

The span at 1–23 (MAAGAGAGGGGGEGDSNGGGTSP) shows a compositional bias: gly residues. Residues 1 to 30 (MAAGAGAGGGGGEGDSNGGGTSPGGVSAAA) are disordered. C3H1-type zinc fingers lie at residues 66 to 94 (RIGE…HPPN), 111 to 139 (RVGQ…HPRE), 157 to 185 (RPNE…HPQP), 318 to 346 (RPDQ…HPKE), and 364 to 392 (RPGE…HPMG). The segment at 405 to 454 (DVSSMHYQLSPSPGHPGILLDGGSGRSHRVPQSDSQQIPSGDGNAEREAS) is disordered. Residues 434-443 (VPQSDSQQIP) show a composition bias toward polar residues.

This Oryza sativa subsp. japonica (Rice) protein is Zinc finger CCCH domain-containing protein 66.